A 507-amino-acid polypeptide reads, in one-letter code: Histidine ammonia-lyase (507 aa).

The 5-imidazolinone (Ala-Gly) cross-link spans 141–143; it reads ASG. Ser142 carries the 2,3-didehydroalanine (Ser) modification.

Belongs to the PAL/histidase family. Post-translationally, contains an active site 4-methylidene-imidazol-5-one (MIO), which is formed autocatalytically by cyclization and dehydration of residues Ala-Ser-Gly.

Its subcellular location is the cytoplasm. The catalysed reaction is L-histidine = trans-urocanate + NH4(+). The protein operates within amino-acid degradation; L-histidine degradation into L-glutamate; N-formimidoyl-L-glutamate from L-histidine: step 1/3. This chain is Histidine ammonia-lyase, found in Burkholderia ambifaria (strain MC40-6).